The primary structure comprises 345 residues: D-fructose 1,6-bisphosphatase class 2/sedoheptulose 1,7-bisphosphatase (345 aa).

Asp33, Glu57, Asp97, and Glu100 together coordinate Mn(2+). Residues 100–102, Tyr131, 176–178, and 198–200 contribute to the substrate site; these read EGT, RPR, and DGD. Glu225 lines the Mn(2+) pocket.

Belongs to the FBPase class 2 family. In terms of assembly, homotetramer. Mn(2+) is required as a cofactor.

The catalysed reaction is beta-D-fructose 1,6-bisphosphate + H2O = beta-D-fructose 6-phosphate + phosphate. It carries out the reaction D-sedoheptulose 1,7-bisphosphate + H2O = D-sedoheptulose 7-phosphate + phosphate. Its pathway is carbohydrate biosynthesis; Calvin cycle. In terms of biological role, catalyzes the hydrolysis of fructose 1,6-bisphosphate (Fru 1,6-P2) and sedoheptulose 1,7-bisphosphate (Sed 1,7-P2) to fructose 6-phosphate and sedoheptulose 7-phosphate, respectively. The protein is D-fructose 1,6-bisphosphatase class 2/sedoheptulose 1,7-bisphosphatase of Trichodesmium erythraeum (strain IMS101).